The sequence spans 65 residues: Large ribosomal subunit protein bL35 (65 aa).

The protein belongs to the bacterial ribosomal protein bL35 family.

This is Large ribosomal subunit protein bL35 from Laribacter hongkongensis (strain HLHK9).